A 434-amino-acid polypeptide reads, in one-letter code: Alpha-enolase (434 aa).

S40 serves as a coordination point for Mg(2+). H158 and E167 together coordinate substrate. E210 serves as the catalytic Proton donor. The Mg(2+) site is built by D245, E293, and D318. Residues E293 and D318 each contribute to the substrate site. K343 functions as the Proton acceptor in the catalytic mechanism. Residues S370 to S373 and K394 contribute to the substrate site.

The protein belongs to the enolase family. In terms of assembly, homodimer. It depends on Mg(2+) as a cofactor.

It localises to the cytoplasm. The enzyme catalyses (2R)-2-phosphoglycerate = phosphoenolpyruvate + H2O. Its pathway is carbohydrate degradation; glycolysis; pyruvate from D-glyceraldehyde 3-phosphate: step 4/5. This chain is Alpha-enolase, found in Python regius (Ball python).